Here is a 482-residue protein sequence, read N- to C-terminus: G-protein coupled receptor 37-like 1 (482 aa).

An N-terminal signal peptide occupies residues 1–25 (MRWLWPLGVSLAVALAAGPERAPRG). Disordered regions lie at residues 25 to 56 (GVWL…AKGL) and 78 to 119 (PTQP…VQNP). The Extracellular portion of the chain corresponds to 26 to 134 (VWLQQGGHQP…ERSYGAYAVL (109 aa)). Over residues 40–54 (QPDRSRRGAEREDAK) the composition is skewed to basic and acidic residues. The N-linked (GlcNAc...) asparagine glycan is linked to Asn105. Residues 135-155 (LLALLLFAVGIVGSLAVMCIV) traverse the membrane as a helical segment. Over 156–167 (WHSYYLKSAWNS) the chain is Cytoplasmic. A helical membrane pass occupies residues 168 to 188 (VLASLALWDFLVLFFCLPVVT). At 189–205 (FHEITKQRLLGAVSCRA) the chain is on the extracellular side. A disulfide bond links Cys203 and Cys286. A helical transmembrane segment spans residues 206-226 (VPFVEVSSLGVTTFSLCALGI). At 227-251 (DRFHVATSTLPKARPIEPCPSILAK) the chain is on the cytoplasmic side. A helical transmembrane segment spans residues 252 to 272 (LAVIWVGSMTLAAPELLLWQL). At 273-310 (VREPSPAAGTVDTCIMKPSAHLPESLYSLVLTYQNARM) the chain is on the extracellular side. A helical transmembrane segment spans residues 311–331 (WWSFGCYFCLPVLFTVTCQLV). Topologically, residues 332-361 (TWRVRGTPGRKPESRPGPQEPRGARPSSTV) are cytoplasmic. The interval 338-358 (TPGRKPESRPGPQEPRGARPS) is disordered. A helical membrane pass occupies residues 362–382 (AGLAAVHALCALPENVCNVVA). The Extracellular portion of the chain corresponds to 383-398 (AYLSAALTRQTLELLG). A helical membrane pass occupies residues 399–419 (LVTQFSTFFKAALTPLLLLCV). The Cytoplasmic portion of the chain corresponds to 420–482 (SRPLGRAFLD…PPLLALGTPC (63 aa)). Phosphothreonine is present on Thr480.

The protein belongs to the G-protein coupled receptor 1 family. Interacts with the PTCH1 receptor. Post-translationally, undergoes metalloprotease-mediated cleavage which reduces its constitutive activity. In terms of processing, ubiquitinated.

Its subcellular location is the cell membrane. It is found in the cell projection. The protein localises to the cilium membrane. In terms of biological role, G-protein coupled receptor. Has been shown to bind the neuroprotective and glioprotective factor prosaposin (PSAP), leading to endocytosis followed by an ERK phosphorylation cascade. However, other studies have shown that prosaposin does not increase activity. It has been suggested that GPR37L1 is a constitutively active receptor which signals through the guanine nucleotide-binding protein G(s) subunit alpha. Participates in the regulation of postnatal cerebellar development by modulating the Shh pathway. Regulates baseline blood pressure in females and protects against cardiovascular stress in males. Mediates inhibition of astrocyte glutamate transporters and reduction in neuronal N-methyl-D-aspartate receptor activity. This Bos taurus (Bovine) protein is G-protein coupled receptor 37-like 1 (GPR37L1).